We begin with the raw amino-acid sequence, 221 residues long: Endonuclease V (221 aa).

Mg(2+) contacts are provided by Asp43 and Asp111.

This sequence belongs to the endonuclease V family. The cofactor is Mg(2+).

The protein resides in the cytoplasm. The enzyme catalyses Endonucleolytic cleavage at apurinic or apyrimidinic sites to products with a 5'-phosphate.. Its function is as follows. DNA repair enzyme involved in the repair of deaminated bases. Selectively cleaves double-stranded DNA at the second phosphodiester bond 3' to a deoxyinosine leaving behind the intact lesion on the nicked DNA. This Azotobacter vinelandii (strain DJ / ATCC BAA-1303) protein is Endonuclease V.